The chain runs to 201 residues: MNTVLFALGAYLIGSISFAVVVSKCFRLADPRSYGSKNPGATNVLRSGNKKAAILTLLGDGAKGFLAVWLVKHFGPGYGVHENGVALVAIAVFLGHLWPVFFRFVGGKGVATALGVLLALNGWLGLATLVTWLVIAYAFRYSSLAALIAAIFAPFYYGLLFGPDVILLAVLAMSILLVYRHSKNIGNLLAGKESRLGSKKK.

The next 6 helical transmembrane spans lie at 3–23 (TVLF…VVVS), 51–71 (KAAI…VWLV), 85–105 (VALV…FRFV), 116–136 (VLLA…LVIA), 137–157 (YAFR…PFYY), and 158–178 (GLLF…ILLV).

Belongs to the PlsY family. In terms of assembly, probably interacts with PlsX.

The protein localises to the cell inner membrane. It carries out the reaction an acyl phosphate + sn-glycerol 3-phosphate = a 1-acyl-sn-glycero-3-phosphate + phosphate. Its pathway is lipid metabolism; phospholipid metabolism. Its function is as follows. Catalyzes the transfer of an acyl group from acyl-phosphate (acyl-PO(4)) to glycerol-3-phosphate (G3P) to form lysophosphatidic acid (LPA). This enzyme utilizes acyl-phosphate as fatty acyl donor, but not acyl-CoA or acyl-ACP. The protein is Glycerol-3-phosphate acyltransferase of Janthinobacterium sp. (strain Marseille) (Minibacterium massiliensis).